Here is a 287-residue protein sequence, read N- to C-terminus: ATP synthase gamma chain (287 aa).

This sequence belongs to the ATPase gamma chain family. In terms of assembly, F-type ATPases have 2 components, CF(1) - the catalytic core - and CF(0) - the membrane proton channel. CF(1) has five subunits: alpha(3), beta(3), gamma(1), delta(1), epsilon(1). CF(0) has three main subunits: a, b and c.

It localises to the cell inner membrane. Its function is as follows. Produces ATP from ADP in the presence of a proton gradient across the membrane. The gamma chain is believed to be important in regulating ATPase activity and the flow of protons through the CF(0) complex. The protein is ATP synthase gamma chain of Sodalis glossinidius (strain morsitans).